The sequence spans 172 residues: C-phycocyanin beta subunit (172 aa).

Asn-72 bears the N4-methylasparagine mark. Residues Cys-82 and Cys-153 each coordinate (2R,3E)-phycocyanobilin.

Belongs to the phycobiliprotein family. In terms of assembly, heterodimer of an alpha and a beta subunit, which further assembles into trimers and the trimers into hexamers. Contains two covalently linked bilin chromophores.

The protein resides in the cellular thylakoid membrane. In terms of biological role, light-harvesting photosynthetic bile pigment-protein from the phycobiliprotein complex (phycobilisome, PBS). Phycocyanin is the major phycobiliprotein in the PBS rod. In Synechocystis sp. (strain PCC 6701), this protein is C-phycocyanin beta subunit (cpcB).